The following is a 230-amino-acid chain: N-(5'-phosphoribosyl)anthranilate isomerase (230 aa).

It belongs to the TrpF family.

The catalysed reaction is N-(5-phospho-beta-D-ribosyl)anthranilate = 1-(2-carboxyphenylamino)-1-deoxy-D-ribulose 5-phosphate. Its pathway is amino-acid biosynthesis; L-tryptophan biosynthesis; L-tryptophan from chorismate: step 3/5. In Thermosynechococcus vestitus (strain NIES-2133 / IAM M-273 / BP-1), this protein is N-(5'-phosphoribosyl)anthranilate isomerase.